The following is a 576-amino-acid chain: Sulfite reductase [NADPH] hemoprotein beta-component (576 aa).

The segment covering 1–12 (MDAKTQPDRSRD) has biased composition (basic and acidic residues). The tract at residues 1–26 (MDAKTQPDRSRDVSQPLDKLGPDETL) is disordered. The [4Fe-4S] cluster site is built by Cys441, Cys447, Cys486, and Cys490. Cys490 provides a ligand contact to siroheme.

This sequence belongs to the nitrite and sulfite reductase 4Fe-4S domain family. Alpha(8)-beta(8). The alpha component is a flavoprotein, the beta component is a hemoprotein. Siroheme serves as cofactor. It depends on [4Fe-4S] cluster as a cofactor.

The catalysed reaction is hydrogen sulfide + 3 NADP(+) + 3 H2O = sulfite + 3 NADPH + 4 H(+). The protein operates within sulfur metabolism; hydrogen sulfide biosynthesis; hydrogen sulfide from sulfite (NADPH route): step 1/1. Functionally, component of the sulfite reductase complex that catalyzes the 6-electron reduction of sulfite to sulfide. This is one of several activities required for the biosynthesis of L-cysteine from sulfate. In Nitrobacter winogradskyi (strain ATCC 25391 / DSM 10237 / CIP 104748 / NCIMB 11846 / Nb-255), this protein is Sulfite reductase [NADPH] hemoprotein beta-component.